A 156-amino-acid chain; its full sequence is Small ribosomal subunit protein uS7 (156 aa).

This sequence belongs to the universal ribosomal protein uS7 family. As to quaternary structure, part of the 30S ribosomal subunit. Contacts proteins S9 and S11.

Functionally, one of the primary rRNA binding proteins, it binds directly to 16S rRNA where it nucleates assembly of the head domain of the 30S subunit. Is located at the subunit interface close to the decoding center, probably blocks exit of the E-site tRNA. This chain is Small ribosomal subunit protein uS7, found in Dehalococcoides mccartyi (strain ATCC BAA-2100 / JCM 16839 / KCTC 5957 / BAV1).